Here is an 837-residue protein sequence, read N- to C-terminus: Phenylalanine--tRNA ligase beta subunit (837 aa).

The tRNA-binding domain maps to 39–149; it reads SASLEGIVTG…EMNIAIPKIG (111 aa). Positions 415–520 constitute a B5 domain; that stretch reads IEEQLLLLRR…RLIGYDRFDS (106 aa). 4 residues coordinate Mg(2+): D498, D504, E507, and E508. Residues 743-836 enclose the FDX-ACB domain; sequence PTVPSMERDI…LKVEFSAELR (94 aa).

This sequence belongs to the phenylalanyl-tRNA synthetase beta subunit family. Type 1 subfamily. As to quaternary structure, tetramer of two alpha and two beta subunits. Requires Mg(2+) as cofactor.

The protein resides in the cytoplasm. It carries out the reaction tRNA(Phe) + L-phenylalanine + ATP = L-phenylalanyl-tRNA(Phe) + AMP + diphosphate + H(+). This chain is Phenylalanine--tRNA ligase beta subunit, found in Prochlorococcus marinus (strain SARG / CCMP1375 / SS120).